The primary structure comprises 396 residues: 1-deoxy-D-xylulose 5-phosphate reductoisomerase (396 aa).

Residues T13, G14, S15, I16, and N127 each contribute to the NADPH site. K128 serves as a coordination point for 1-deoxy-D-xylulose 5-phosphate. E129 is an NADPH binding site. D153 is a binding site for Mn(2+). Residues S154, E155, S184, and H207 each contribute to the 1-deoxy-D-xylulose 5-phosphate site. E155 lines the Mn(2+) pocket. G213 provides a ligand contact to NADPH. 4 residues coordinate 1-deoxy-D-xylulose 5-phosphate: S220, N225, K226, and E229. E229 is a Mn(2+) binding site.

Belongs to the DXR family. It depends on Mg(2+) as a cofactor. Mn(2+) is required as a cofactor.

It catalyses the reaction 2-C-methyl-D-erythritol 4-phosphate + NADP(+) = 1-deoxy-D-xylulose 5-phosphate + NADPH + H(+). It functions in the pathway isoprenoid biosynthesis; isopentenyl diphosphate biosynthesis via DXP pathway; isopentenyl diphosphate from 1-deoxy-D-xylulose 5-phosphate: step 1/6. Inhibited by fosmidomycin and 3-(N-acetyl-N-hydroxyamino)-propylphosphonic acid (FR-900098). Catalyzes the NADPH-dependent rearrangement and reduction of 1-deoxy-D-xylulose-5-phosphate (DXP) to 2-C-methyl-D-erythritol 4-phosphate (MEP). The protein is 1-deoxy-D-xylulose 5-phosphate reductoisomerase of Pseudomonas aeruginosa (strain ATCC 15692 / DSM 22644 / CIP 104116 / JCM 14847 / LMG 12228 / 1C / PRS 101 / PAO1).